A 543-amino-acid chain; its full sequence is uncharacterized protein (543 aa).

The next 6 helical transmembrane spans lie at 47-67, 79-99, 126-146, 176-196, 198-218, and 249-269; these read FSLL…PSLV, GGMV…AFAL, AFLS…GFAS, IYVA…KFLA, FSSF…ISLA, and FILC…CATI. Residue asparagine 275 is glycosylated (N-linked (GlcNAc...) asparagine). The next 3 helical transmembrane spans lie at 282–302, 335–355, and 384–404; these read IAII…MITI, AVGV…ALCL, and IPLN…LLML. N-linked (GlcNAc...) asparagine glycosylation is present at asparagine 406. 3 helical membrane-spanning segments follow: residues 410 to 430, 452 to 472, and 480 to 500; these read ISSI…LPLV, ISIV…FPSY, and MNWA…YYYL. Asparagine 519 carries an N-linked (GlcNAc...) asparagine glycan.

This sequence belongs to the amino acid-polyamine-organocation (APC) superfamily.

The protein localises to the membrane. This is an uncharacterized protein from Schizosaccharomyces pombe (strain 972 / ATCC 24843) (Fission yeast).